Here is a 582-residue protein sequence, read N- to C-terminus: Cryptochrome DASH, chloroplastic/mitochondrial (582 aa).

The N-terminal 49 residues, 1-49, are a transit peptide targeting the chloroplast and mitochondrion; that stretch reads MLHFLSSSSPLNPQFLLLPRQSARLRVLLSIPVSAMSSSSSSSSRGALA. Residues 84-234 enclose the Photolyase/cryptochrome alpha/beta domain; the sequence is GVAIVWFRND…KLQLIWGATL (151 aa). The disordered stretch occupies residues 560–582; the sequence is GHQKRDQQFNRQRRPGHMYRRQK. A compositionally biased stretch (basic residues) spans 570–582; that stretch reads RQRRPGHMYRRQK.

Belongs to the DNA photolyase class-1 family. FAD serves as cofactor. It depends on (6R)-5,10-methylene-5,6,7,8-tetrahydrofolate as a cofactor.

The protein resides in the plastid. It localises to the chloroplast. Its subcellular location is the mitochondrion. May have a photoreceptor function. Binds ss- and ds-DNA in a sequence non-specific manner, lacks photolyase activity. The polypeptide is Cryptochrome DASH, chloroplastic/mitochondrial (CRYD) (Oryza sativa subsp. japonica (Rice)).